The primary structure comprises 223 residues: Phosphoribosylformylglycinamidine synthase subunit PurQ (223 aa).

One can recognise a Glutamine amidotransferase type-1 domain in the interval 4–223 (KIGVITFPGT…FLSAVGTIAA (220 aa)). Cys87 (nucleophile) is an active-site residue. Residues His195 and Glu197 contribute to the active site.

Part of the FGAM synthase complex composed of 1 PurL, 1 PurQ and 2 PurS subunits.

Its subcellular location is the cytoplasm. The enzyme catalyses N(2)-formyl-N(1)-(5-phospho-beta-D-ribosyl)glycinamide + L-glutamine + ATP + H2O = 2-formamido-N(1)-(5-O-phospho-beta-D-ribosyl)acetamidine + L-glutamate + ADP + phosphate + H(+). It carries out the reaction L-glutamine + H2O = L-glutamate + NH4(+). Its pathway is purine metabolism; IMP biosynthesis via de novo pathway; 5-amino-1-(5-phospho-D-ribosyl)imidazole from N(2)-formyl-N(1)-(5-phospho-D-ribosyl)glycinamide: step 1/2. Functionally, part of the phosphoribosylformylglycinamidine synthase complex involved in the purines biosynthetic pathway. Catalyzes the ATP-dependent conversion of formylglycinamide ribonucleotide (FGAR) and glutamine to yield formylglycinamidine ribonucleotide (FGAM) and glutamate. The FGAM synthase complex is composed of three subunits. PurQ produces an ammonia molecule by converting glutamine to glutamate. PurL transfers the ammonia molecule to FGAR to form FGAM in an ATP-dependent manner. PurS interacts with PurQ and PurL and is thought to assist in the transfer of the ammonia molecule from PurQ to PurL. This Corynebacterium glutamicum (strain ATCC 13032 / DSM 20300 / JCM 1318 / BCRC 11384 / CCUG 27702 / LMG 3730 / NBRC 12168 / NCIMB 10025 / NRRL B-2784 / 534) protein is Phosphoribosylformylglycinamidine synthase subunit PurQ.